The sequence spans 174 residues: Regenerating islet-derived protein 3-alpha (174 aa).

A signal peptide spans 1-25; that stretch reads MLPRLSFNNVSWTLLYYLFIFQVRG. A propeptide spanning residues 26 to 36 is cleaved from the precursor; the sequence is EDSQKAVPSTR. 3 disulfides stabilise this stretch: Cys39-Cys50, Cys67-Cys170, and Cys145-Cys162. Positions 46–171 constitute a C-type lectin domain; it reads YRSYCYTLVT…CDVELPFVCK (126 aa). Residues 102–117 form a sufficient to activate EXTL3 region; sequence WIWLHDPTMGQQPNGG. Positions 106 and 120 each coordinate Zn(2+).

In terms of assembly, forms a hexameric membrane-permeabilizing oligomeric pore on membrane phospholipids. The hexamer is formed by three dimers related by helical symmetry. Forms filaments, filamentation traps pore complexes and limits damage to host cells. Interacts with EXTL3. Post-translationally, proteolytic processing by trypsin removes an inhibitory N-terminal propeptide and is essential for peptidoglycan binding and antibacterial activity. Low expression found in healthy pancreas.

The protein localises to the secreted. Its function is as follows. Bactericidal C-type lectin. The lack of the EPN motif may explain its inability to bind peptidoglycan. In terms of biological role, acts as a hormone in response to different stimuli like anti-inflammatory signals, such as IL17A, or gut microbiome. Secreted by different cell types to activate its receptor EXTL3 and induce cell specific signaling pathways. Induced by IL17A in keratinocytes, regulates keratinocyte proliferation and differentiation after skin injury via activation of EXTL3-PI3K-AKT signaling pathway. In parallel, inhibits skin inflammation through the inhibition of inflammatory cytokines such as IL6 and TNF. In pancreas, is able to permealize beta-cells membrane and stimulate their proliferation. This chain is Regenerating islet-derived protein 3-alpha (Reg3a), found in Rattus norvegicus (Rat).